The sequence spans 308 residues: Quinolinate synthase (308 aa).

Residues His21 and Ser38 each contribute to the iminosuccinate site. Residue Cys83 coordinates [4Fe-4S] cluster. Residues 109–111 (YIN) and Ser126 contribute to the iminosuccinate site. Cys170 is a [4Fe-4S] cluster binding site. Iminosuccinate contacts are provided by residues 196 to 198 (HPE) and Thr213. Cys263 provides a ligand contact to [4Fe-4S] cluster.

The protein belongs to the quinolinate synthase family. Type 2 subfamily. The cofactor is [4Fe-4S] cluster.

Its subcellular location is the cytoplasm. It catalyses the reaction iminosuccinate + dihydroxyacetone phosphate = quinolinate + phosphate + 2 H2O + H(+). It functions in the pathway cofactor biosynthesis; NAD(+) biosynthesis; quinolinate from iminoaspartate: step 1/1. Functionally, catalyzes the condensation of iminoaspartate with dihydroxyacetone phosphate to form quinolinate. The chain is Quinolinate synthase from Sulfurisphaera tokodaii (strain DSM 16993 / JCM 10545 / NBRC 100140 / 7) (Sulfolobus tokodaii).